The sequence spans 180 residues: NADH-quinone oxidoreductase subunit I (180 aa).

2 4Fe-4S ferredoxin-type domains span residues 48–80 and 90–119; these read IVLT…LQKA and EFFR…LTPD. Cysteine 60, cysteine 63, cysteine 66, cysteine 70, cysteine 99, cysteine 102, cysteine 105, and cysteine 109 together coordinate [4Fe-4S] cluster.

This sequence belongs to the complex I 23 kDa subunit family. In terms of assembly, NDH-1 is composed of 13 different subunits. Subunits NuoA, H, J, K, L, M, N constitute the membrane sector of the complex. [4Fe-4S] cluster is required as a cofactor.

Its subcellular location is the cell inner membrane. It catalyses the reaction a quinone + NADH + 5 H(+)(in) = a quinol + NAD(+) + 4 H(+)(out). Its function is as follows. NDH-1 shuttles electrons from NADH, via FMN and iron-sulfur (Fe-S) centers, to quinones in the respiratory chain. The immediate electron acceptor for the enzyme in this species is believed to be ubiquinone. Couples the redox reaction to proton translocation (for every two electrons transferred, four hydrogen ions are translocated across the cytoplasmic membrane), and thus conserves the redox energy in a proton gradient. This chain is NADH-quinone oxidoreductase subunit I, found in Edwardsiella ictaluri (strain 93-146).